The following is a 168-amino-acid chain: ATP synthase F(1) complex subunit delta, mitochondrial (168 aa).

The N-terminal 22 residues, 1 to 22 (MLPSALLRRPGLGRLVRQVRLY), are a transit peptide targeting the mitochondrion. An N6-acetyllysine; alternate mark is found at lysine 136 and lysine 165. Residues lysine 136 and lysine 165 each carry the N6-succinyllysine; alternate modification.

It belongs to the ATPase epsilon chain family. In terms of assembly, component of the ATP synthase complex composed at least of ATP5F1A/subunit alpha, ATP5F1B/subunit beta, ATP5MC1/subunit c (homooctomer), MT-ATP6/subunit a, MT-ATP8/subunit 8, ATP5ME/subunit e, ATP5MF/subunit f, ATP5MG/subunit g, ATP5MK/subunit k, ATP5MJ/subunit j, ATP5F1C/subunit gamma, ATP5F1D/subunit delta, ATP5F1E/subunit epsilon, ATP5PF/subunit F6, ATP5PB/subunit b, ATP5PD/subunit d, ATP5PO/subunit OSCP. ATP synthase complex consists of a soluble F(1) head domain (subunits alpha(3) and beta(3)) - the catalytic core - and a membrane F(0) domain - the membrane proton channel (subunits c, a, 8, e, f, g, k and j). These two domains are linked by a central stalk (subunits gamma, delta, and epsilon) rotating inside the F1 region and a stationary peripheral stalk (subunits F6, b, d, and OSCP). Component of a complex composed at least by ATPIF1, ATP5F1A, ATP5F1B, ATP5F1C AND ATP5F1E.

It is found in the mitochondrion. The protein localises to the mitochondrion inner membrane. In terms of biological role, subunit delta, of the mitochondrial membrane ATP synthase complex (F(1)F(0) ATP synthase or Complex V) that produces ATP from ADP in the presence of a proton gradient across the membrane which is generated by electron transport complexes of the respiratory chain. ATP synthase complex consist of a soluble F(1) head domain - the catalytic core - and a membrane F(1) domain - the membrane proton channel. These two domains are linked by a central stalk rotating inside the F(1) region and a stationary peripheral stalk. During catalysis, ATP synthesis in the catalytic domain of F(1) is coupled via a rotary mechanism of the central stalk subunits to proton translocation. In vivo, can only synthesize ATP although its ATP hydrolase activity can be activated artificially in vitro. With the central stalk subunit gamma, is essential for the biogenesis of F(1) catalytic part of the ATP synthase complex namely in the formation of F1 assembly intermediate. The protein is ATP synthase F(1) complex subunit delta, mitochondrial of Bos taurus (Bovine).